The primary structure comprises 119 residues: Beta-2-microglobulin (119 aa).

An N-terminal signal peptide occupies residues 1 to 20; sequence MARFVVVALLVLLSLSGLEA. The region spanning 25-114 is the Ig-like C1-type domain; sequence PKIQVYSRHP…VTLSTPKTVK (90 aa). An intrachain disulfide couples Cys45 to Cys100.

It belongs to the beta-2-microglobulin family. In terms of assembly, heterodimer of an alpha chain and a beta chain. Beta-2-microglobulin is the beta-chain of major histocompatibility complex class I molecules.

It localises to the secreted. Functionally, component of the class I major histocompatibility complex (MHC). Involved in the presentation of peptide antigens to the immune system. The chain is Beta-2-microglobulin (B2M) from Aotus lemurinus (Gray-bellied night monkey).